Reading from the N-terminus, the 126-residue chain is Arginine decarboxylase proenzyme (126 aa).

Catalysis depends on Ser74, which acts as the Schiff-base intermediate with substrate; via pyruvic acid. Pyruvic acid (Ser); by autocatalysis is present on Ser74. Residue His79 is the Proton acceptor; for processing activity of the active site. The Proton donor; for catalytic activity role is filled by Cys94.

This sequence belongs to the prokaryotic AdoMetDC family. Type 1 subfamily. As to quaternary structure, heterooctamer of four alpha and four beta chains arranged as a tetramer of alpha/beta heterodimers. Pyruvate serves as cofactor. In terms of processing, is synthesized initially as an inactive proenzyme. Formation of the active enzyme involves a self-maturation process in which the active site pyruvoyl group is generated from an internal serine residue via an autocatalytic post-translational modification. Two non-identical subunits are generated from the proenzyme in this reaction, and the pyruvate is formed at the N-terminus of the alpha chain, which is derived from the carboxyl end of the proenzyme. The post-translation cleavage follows an unusual pathway, termed non-hydrolytic serinolysis, in which the side chain hydroxyl group of the serine supplies its oxygen atom to form the C-terminus of the beta chain, while the remainder of the serine residue undergoes an oxidative deamination to produce ammonia and the pyruvoyl group blocking the N-terminus of the alpha chain.

The catalysed reaction is L-arginine + H(+) = agmatine + CO2. It participates in amine and polyamine biosynthesis; agmatine biosynthesis; agmatine from L-arginine: step 1/1. In terms of biological role, specifically catalyzes the decarboxylation of L-arginine to agmatine. Has no S-adenosylmethionine decarboxylase (AdoMetDC) activity. This is Arginine decarboxylase proenzyme from Pyrobaculum islandicum (strain DSM 4184 / JCM 9189 / GEO3).